Consider the following 634-residue polypeptide: DNA-directed RNA polymerase subunit gamma (634 aa).

Residues Cys-74, Cys-76, Cys-89, and Cys-92 each contribute to the Zn(2+) site. 3 residues coordinate Mg(2+): Asp-471, Asp-473, and Asp-475.

Belongs to the RNA polymerase beta' chain family. RpoC1 subfamily. In cyanobacteria the RNAP catalytic core is composed of 2 alpha, 1 beta, 1 beta', 1 gamma and 1 omega subunit. When a sigma factor is associated with the core the holoenzyme is formed, which can initiate transcription. The cofactor is Mg(2+). Zn(2+) is required as a cofactor.

The catalysed reaction is RNA(n) + a ribonucleoside 5'-triphosphate = RNA(n+1) + diphosphate. In terms of biological role, DNA-dependent RNA polymerase catalyzes the transcription of DNA into RNA using the four ribonucleoside triphosphates as substrates. This Parasynechococcus marenigrum (strain WH8102) protein is DNA-directed RNA polymerase subunit gamma.